The sequence spans 776 residues: Bifunctional lysine-specific demethylase and histidyl-hydroxylase NO66 (776 aa).

Disordered stretches follow at residues 1–57, 87–126, and 165–288; these read MGKK…EPKF, EQNGGKKRRHREISPKMEAKKPKVESKSKDGVAAKKAHKH, and ILDE…DDEG. Composition is skewed to basic and acidic residues over residues 47-57 and 98-119; these read HYKEPSKEPKF and EISPKMEAKKPKVESKSKDGVA. The segment covering 166 to 204 has biased composition (acidic residues); that stretch reads LDEEVEDEEIDEEEFEDEEEVEDEEGMDEDETEIDESEM. The segment covering 206–216 has biased composition (basic and acidic residues); sequence VDPKDIERCIE. A compositionally biased stretch (acidic residues) spans 217–288; it reads FEDVDDEDEM…EMDADSDDEG (72 aa). One can recognise a JmjC domain in the interval 425–569; that stretch reads QLVNPQTFDD…NLMEKVIPEA (145 aa). The Fe cation site is built by H468, D470, and H535.

The protein belongs to the ROX family. NO66 subfamily. Requires Fe(2+) as cofactor.

The protein resides in the nucleus. The enzyme catalyses N(6),N(6)-dimethyl-L-lysyl(36)-[histone H3] + 2 2-oxoglutarate + 2 O2 = L-lysyl(36)-[histone H3] + 2 formaldehyde + 2 succinate + 2 CO2. Functionally, oxygenase that can act as both a histone lysine demethylase and a ribosomal histidine hydroxylase. Specifically demethylates 'Lys-4' (H3K4me) and 'Lys-36' (H3K36me) of histone H3, thereby playing a central role in histone code. This chain is Bifunctional lysine-specific demethylase and histidyl-hydroxylase NO66 (jmjc-1), found in Caenorhabditis briggsae.